Here is a 223-residue protein sequence, read N- to C-terminus: Phosphoribosylformylglycinamidine synthase subunit PurQ (223 aa).

One can recognise a Glutamine amidotransferase type-1 domain in the interval 3 to 223 (SAVVQLPGLN…FASALDVVAA (221 aa)). C86 functions as the Nucleophile in the catalytic mechanism. Residues H196 and E198 contribute to the active site.

Part of the FGAM synthase complex composed of 1 PurL, 1 PurQ and 2 PurS subunits.

The protein localises to the cytoplasm. It catalyses the reaction N(2)-formyl-N(1)-(5-phospho-beta-D-ribosyl)glycinamide + L-glutamine + ATP + H2O = 2-formamido-N(1)-(5-O-phospho-beta-D-ribosyl)acetamidine + L-glutamate + ADP + phosphate + H(+). The catalysed reaction is L-glutamine + H2O = L-glutamate + NH4(+). It functions in the pathway purine metabolism; IMP biosynthesis via de novo pathway; 5-amino-1-(5-phospho-D-ribosyl)imidazole from N(2)-formyl-N(1)-(5-phospho-D-ribosyl)glycinamide: step 1/2. In terms of biological role, part of the phosphoribosylformylglycinamidine synthase complex involved in the purines biosynthetic pathway. Catalyzes the ATP-dependent conversion of formylglycinamide ribonucleotide (FGAR) and glutamine to yield formylglycinamidine ribonucleotide (FGAM) and glutamate. The FGAM synthase complex is composed of three subunits. PurQ produces an ammonia molecule by converting glutamine to glutamate. PurL transfers the ammonia molecule to FGAR to form FGAM in an ATP-dependent manner. PurS interacts with PurQ and PurL and is thought to assist in the transfer of the ammonia molecule from PurQ to PurL. In Rhizobium etli (strain ATCC 51251 / DSM 11541 / JCM 21823 / NBRC 15573 / CFN 42), this protein is Phosphoribosylformylglycinamidine synthase subunit PurQ.